A 179-amino-acid chain; its full sequence is Large ribosomal subunit protein uL5 (179 aa).

Belongs to the universal ribosomal protein uL5 family. In terms of assembly, part of the 50S ribosomal subunit; part of the 5S rRNA/L5/L18/L25 subcomplex. Contacts the 5S rRNA and the P site tRNA. Forms a bridge to the 30S subunit in the 70S ribosome.

In terms of biological role, this is one of the proteins that bind and probably mediate the attachment of the 5S RNA into the large ribosomal subunit, where it forms part of the central protuberance. In the 70S ribosome it contacts protein S13 of the 30S subunit (bridge B1b), connecting the 2 subunits; this bridge is implicated in subunit movement. Contacts the P site tRNA; the 5S rRNA and some of its associated proteins might help stabilize positioning of ribosome-bound tRNAs. This chain is Large ribosomal subunit protein uL5, found in Clostridium beijerinckii (strain ATCC 51743 / NCIMB 8052) (Clostridium acetobutylicum).